Consider the following 113-residue polypeptide: Dolichyl-diphosphooligosaccharide--protein glycosyltransferase subunit DAD1 (113 aa).

N-acetylserine is present on S2. At 2 to 30 (SASVLSVISRFLEEYLSSTPQRLKLLDAY) the chain is on the cytoplasmic side. The helical transmembrane segment at 31 to 51 (LLYILLTGALQFGYCLLVGTF) threads the bilayer. Position 52 (P52) is a topological domain, lumenal. Residues 53-73 (FNSFLSGFISCVGSFILAVCL) form a helical membrane-spanning segment. Over 74–92 (RIQINPQNKADFQGISPER) the chain is Cytoplasmic. A helical membrane pass occupies residues 93 to 113 (AFADFLFASTILHLVVMNFVG).

It belongs to the DAD/OST2 family. In terms of assembly, component of the oligosaccharyltransferase (OST) complex. OST exists in two different complex forms which contain common core subunits RPN1, RPN2, OST48, OST4, DAD1 and TMEM258, either STT3A or STT3B as catalytic subunits, and form-specific accessory subunits. STT3A complex assembly occurs through the formation of 3 subcomplexes. Subcomplex 1 contains RPN1 and TMEM258, subcomplex 2 contains the STT3A-specific subunits STT3A, DC2/OSTC, and KCP2 as well as the core subunit OST4, and subcomplex 3 contains RPN2, DAD1, and OST48. The STT3A complex can form stable complexes with the Sec61 complex or with both the Sec61 and TRAP complexes.

Its subcellular location is the endoplasmic reticulum membrane. Its pathway is protein modification; protein glycosylation. Functionally, subunit of the oligosaccharyl transferase (OST) complex that catalyzes the initial transfer of a defined glycan (Glc(3)Man(9)GlcNAc(2) in eukaryotes) from the lipid carrier dolichol-pyrophosphate to an asparagine residue within an Asn-X-Ser/Thr consensus motif in nascent polypeptide chains, the first step in protein N-glycosylation. N-glycosylation occurs cotranslationally and the complex associates with the Sec61 complex at the channel-forming translocon complex that mediates protein translocation across the endoplasmic reticulum (ER). All subunits are required for a maximal enzyme activity. The polypeptide is Dolichyl-diphosphooligosaccharide--protein glycosyltransferase subunit DAD1 (Sus scrofa (Pig)).